The following is a 563-amino-acid chain: uncharacterized protein (563 aa).

The protein belongs to the HyuB family.

This is an uncharacterized protein from Methanocaldococcus jannaschii (strain ATCC 43067 / DSM 2661 / JAL-1 / JCM 10045 / NBRC 100440) (Methanococcus jannaschii).